Reading from the N-terminus, the 101-residue chain is NAD(P)H-quinone oxidoreductase subunit 4L, chloroplastic (101 aa).

The next 3 helical transmembrane spans lie at 2–22 (MLEHVLVLSAYLFSIGIYGLI), 32–52 (MCLELILNAVNLNFVTFSDFF), and 61–81 (IFSIFVIAIAAAEAAIGPAIV).

The protein belongs to the complex I subunit 4L family. NDH is composed of at least 16 different subunits, 5 of which are encoded in the nucleus.

It is found in the plastid. The protein localises to the chloroplast thylakoid membrane. The enzyme catalyses a plastoquinone + NADH + (n+1) H(+)(in) = a plastoquinol + NAD(+) + n H(+)(out). The catalysed reaction is a plastoquinone + NADPH + (n+1) H(+)(in) = a plastoquinol + NADP(+) + n H(+)(out). Its function is as follows. NDH shuttles electrons from NAD(P)H:plastoquinone, via FMN and iron-sulfur (Fe-S) centers, to quinones in the photosynthetic chain and possibly in a chloroplast respiratory chain. The immediate electron acceptor for the enzyme in this species is believed to be plastoquinone. Couples the redox reaction to proton translocation, and thus conserves the redox energy in a proton gradient. The protein is NAD(P)H-quinone oxidoreductase subunit 4L, chloroplastic of Fagopyrum esculentum subsp. ancestrale (Wild buckwheat).